A 565-amino-acid polypeptide reads, in one-letter code: Periplasmic trehalase (565 aa).

Residues 1–30 (MKSPTPSRPQKMALIPACIFLCFAALSVQA) form the signal peptide. Substrate contacts are provided by residues arginine 152, 159 to 160 (WD), asparagine 196, 205 to 207 (RSQ), 277 to 279 (RPE), and glycine 310. Active-site proton donor/acceptor residues include aspartate 312 and glutamate 496. Residue glutamate 511 coordinates substrate. The interval 539–565 (CDNVPATRPLSESTTQPLKQKEAEPTP) is disordered.

The protein belongs to the glycosyl hydrolase 37 family. As to quaternary structure, monomer.

The protein localises to the periplasm. The catalysed reaction is alpha,alpha-trehalose + H2O = alpha-D-glucose + beta-D-glucose. In terms of biological role, provides the cells with the ability to utilize trehalose at high osmolarity by splitting it into glucose molecules that can subsequently be taken up by the phosphotransferase-mediated uptake system. The sequence is that of Periplasmic trehalase from Escherichia coli (strain SMS-3-5 / SECEC).